The following is a 125-amino-acid chain: Ribosome-binding factor A (125 aa).

It belongs to the RbfA family. Monomer. Binds 30S ribosomal subunits, but not 50S ribosomal subunits or 70S ribosomes.

It is found in the cytoplasm. Functionally, one of several proteins that assist in the late maturation steps of the functional core of the 30S ribosomal subunit. Associates with free 30S ribosomal subunits (but not with 30S subunits that are part of 70S ribosomes or polysomes). Required for efficient processing of 16S rRNA. May interact with the 5'-terminal helix region of 16S rRNA. The sequence is that of Ribosome-binding factor A from Carboxydothermus hydrogenoformans (strain ATCC BAA-161 / DSM 6008 / Z-2901).